The primary structure comprises 39 residues: Putative beta-neurotoxin (39 aa).

Residues 1-39 (GGKEGYPLNSSNGCKSGRFAGTNSNENTECKGXDAENGY) form a disordered region. The 37-residue stretch at 3–39 (KEGYPLNSSNGCKSGRFAGTNSNENTECKGXDAENGY) folds into the LCN-type CS-alpha/beta domain. Over residues 28–39 (TECKGXDAENGY) the composition is skewed to basic and acidic residues.

The protein belongs to the long (4 C-C) scorpion toxin superfamily. Sodium channel inhibitor family. Beta subfamily. Expressed by the venom gland.

The protein resides in the secreted. In terms of biological role, beta toxins bind voltage-independently at site-4 of sodium channels (Nav) and shift the voltage of activation toward more negative potentials thereby affecting sodium channel activation and promoting spontaneous and repetitive firing. This is Putative beta-neurotoxin from Tityus pachyurus (Colombian scorpion).